The primary structure comprises 181 residues: Protein GrpE (181 aa).

It belongs to the GrpE family. Homodimer.

Its subcellular location is the cytoplasm. In terms of biological role, participates actively in the response to hyperosmotic and heat shock by preventing the aggregation of stress-denatured proteins, in association with DnaK and GrpE. It is the nucleotide exchange factor for DnaK and may function as a thermosensor. Unfolded proteins bind initially to DnaJ; upon interaction with the DnaJ-bound protein, DnaK hydrolyzes its bound ATP, resulting in the formation of a stable complex. GrpE releases ADP from DnaK; ATP binding to DnaK triggers the release of the substrate protein, thus completing the reaction cycle. Several rounds of ATP-dependent interactions between DnaJ, DnaK and GrpE are required for fully efficient folding. The sequence is that of Protein GrpE from Verminephrobacter eiseniae (strain EF01-2).